The sequence spans 366 residues: Ribosomal RNA large subunit methyltransferase M (366 aa).

S-adenosyl-L-methionine contacts are provided by residues S188, C221–G224, D240, D260, and D277. The active-site Proton acceptor is the K306.

This sequence belongs to the class I-like SAM-binding methyltransferase superfamily. RNA methyltransferase RlmE family. RlmM subfamily. Monomer.

The protein resides in the cytoplasm. The catalysed reaction is cytidine(2498) in 23S rRNA + S-adenosyl-L-methionine = 2'-O-methylcytidine(2498) in 23S rRNA + S-adenosyl-L-homocysteine + H(+). Functionally, catalyzes the 2'-O-methylation at nucleotide C2498 in 23S rRNA. This is Ribosomal RNA large subunit methyltransferase M from Photorhabdus laumondii subsp. laumondii (strain DSM 15139 / CIP 105565 / TT01) (Photorhabdus luminescens subsp. laumondii).